Reading from the N-terminus, the 298-residue chain is Mitochondrial 2-oxodicarboxylate carrier (298 aa).

Solcar repeat units lie at residues 10–99 (HETS…YKKF), 106–195 (SPGL…VKNI), and 204–293 (LEFL…TYAW). The next 6 helical transmembrane spans lie at 16–36 (VAAGGSAGLVEICLMHPLDVV), 69–88 (FGFYKGIIPPILAETPKRAV), 112–132 (LIAGLGSGLTEAVVVNPFEVV), 166–186 (GLNKGLTATLGRHGIFNMVYF), 204–224 (LEFLRKFGIGFVSGTMGSVFN), and 276–296 (LGPGGGVMLLVYEYTYAWLQE).

The protein belongs to the mitochondrial carrier (TC 2.A.29) family.

It is found in the mitochondrion inner membrane. It carries out the reaction 2-oxoadipate(in) + 2-oxoglutarate(out) = 2-oxoadipate(out) + 2-oxoglutarate(in). It catalyses the reaction hexanedioate(in) + 2-oxoglutarate(out) = hexanedioate(out) + 2-oxoglutarate(in). The enzyme catalyses L-2-aminoadipate(in) + 2-oxoglutarate(out) = L-2-aminoadipate(out) + 2-oxoglutarate(in). The catalysed reaction is glutarate(in) + 2-oxoglutarate(out) = glutarate(out) + 2-oxoglutarate(in). It carries out the reaction 2-oxoheptanedioate(in) + 2-oxoglutarate(out) = 2-oxoheptanedioate(out) + 2-oxoglutarate(in). It catalyses the reaction heptanedioate(in) + 2-oxoglutarate(out) = heptanedioate(out) + 2-oxoglutarate(in). The enzyme catalyses citrate(in) + 2-oxoglutarate(out) = citrate(out) + 2-oxoglutarate(in). Transports dicarboxylates across the inner membranes of mitochondria by a counter-exchange mechanism. Can transport 2-oxoadipate (2-oxohexanedioate), 2-oxoglutarate, adipate (hexanedioate), glutarate, and to a lesser extent, pimelate (heptanedioate), 2-oxopimelate (2-oxoheptanedioate), 2-aminoadipate (2-aminohexanedioate), oxaloacetate, and citrate. Plays a central role in catabolism of lysine, hydroxylysine, and tryptophan, by transporting common metabolite intermediates (such as 2-oxoadipate) into the mitochondria, where it is converted into acetyl-CoA and can enter the citric acid (TCA) cycle. The polypeptide is Mitochondrial 2-oxodicarboxylate carrier (Slc25a21) (Mus musculus (Mouse)).